Here is a 308-residue protein sequence, read N- to C-terminus: FGLLLGICLIVQIVTGLLLAAHYTADTSLAFASVAHMCRNVQFGWLIRNLHANGASFFFICIYLHIGRGLYYGSYLNKETWNIGVILLLTLMATAFVGYVXPWGQMSYWGATVITNLFSAIPYIGQTLVEWDWGGFSVDNPTLTRFFALHFLLPFVFAGLTLVHLTFLHETGSNKPLGIPSDCDKIPFHPYYSTKDVLGFVLMLIPLITLALFSPNLLGDPENFTPANPLATPPHIKPEWYFLFAYAILRSIPNKLGGVLALAASVLVLFLIPFLHTSKLRSMTFRPLSQILFWTLVANLLMLTWVSN.

4 helical membrane-spanning segments follow: residues 1–21 (FGLL…LLAA), 45–66 (WLIR…YLHI), 81–101 (WNIG…GYVX), and 146–166 (FFAL…VHLT). Residues H51 and H65 each coordinate heme b. H150 and H164 together coordinate heme b. H169 lines the a ubiquinone pocket. 3 helical membrane passes run 194-214 (TKDV…ALFS), 256-276 (LGGV…PFLH), and 288-308 (LSQI…WVSN).

The protein belongs to the cytochrome b family. The cytochrome bc1 complex contains 11 subunits: 3 respiratory subunits (MT-CYB, CYC1 and UQCRFS1), 2 core proteins (UQCRC1 and UQCRC2) and 6 low-molecular weight proteins (UQCRH/QCR6, UQCRB/QCR7, UQCRQ/QCR8, UQCR10/QCR9, UQCR11/QCR10 and a cleavage product of UQCRFS1). This cytochrome bc1 complex then forms a dimer. The cofactor is heme b.

Its subcellular location is the mitochondrion inner membrane. Functionally, component of the ubiquinol-cytochrome c reductase complex (complex III or cytochrome b-c1 complex) that is part of the mitochondrial respiratory chain. The b-c1 complex mediates electron transfer from ubiquinol to cytochrome c. Contributes to the generation of a proton gradient across the mitochondrial membrane that is then used for ATP synthesis. The chain is Cytochrome b (MT-CYB) from Pomatostomus ruficeps (Chestnut-crowned babbler).